The sequence spans 209 residues: Ribosomal RNA large subunit methyltransferase E (209 aa).

S-adenosyl-L-methionine-binding residues include Gly-60, Trp-62, Asp-80, Asp-96, and Asp-121. Lys-161 functions as the Proton acceptor in the catalytic mechanism.

Belongs to the class I-like SAM-binding methyltransferase superfamily. RNA methyltransferase RlmE family.

The protein localises to the cytoplasm. It catalyses the reaction uridine(2552) in 23S rRNA + S-adenosyl-L-methionine = 2'-O-methyluridine(2552) in 23S rRNA + S-adenosyl-L-homocysteine + H(+). Functionally, specifically methylates the uridine in position 2552 of 23S rRNA at the 2'-O position of the ribose in the fully assembled 50S ribosomal subunit. The chain is Ribosomal RNA large subunit methyltransferase E from Pseudomonas fluorescens (strain Pf0-1).